A 282-amino-acid chain; its full sequence is uncharacterized protein (282 aa).

The next 5 helical transmembrane spans lie at Leu9 to Gly29, Ile43 to Ala63, Val123 to Val143, Tyr158 to Leu178, and Leu232 to Met252.

The protein belongs to the steroid 5-alpha reductase family.

The protein localises to the endoplasmic reticulum membrane. This is an uncharacterized protein from Schizosaccharomyces pombe (strain 972 / ATCC 24843) (Fission yeast).